We begin with the raw amino-acid sequence, 361 residues long: Protein Csal_2339 (361 aa).

Catalysis depends on S91, which acts as the Proton acceptor. Substrate-binding positions include G92–S93 and G259–T260.

It belongs to the proline racemase family.

It catalyses the reaction trans-4-hydroxy-L-proline = cis-4-hydroxy-D-proline. In vitro, catalyzes the epimerization of trans-4-hydroxy-L-proline (t4LHyp) to cis-4-hydroxy-D-proline (c4DHyp), albeit with very low efficiency. The physiological substrate may be different. Displays neither proline racemase activity nor t3LHyp dehydratase activity. This is Protein Csal_2339 from Chromohalobacter salexigens (strain ATCC BAA-138 / DSM 3043 / CIP 106854 / NCIMB 13768 / 1H11).